The sequence spans 200 residues: Cysteine dioxygenase type 1 (200 aa).

The Fe cation site is built by histidine 86, histidine 88, and histidine 140. The segment at residues 93 to 157 (CFLKLLQGNL…TEPAVSLHLY (65 aa)) is a cross-link (3'-(S-cysteinyl)-tyrosine (Cys-Tyr)).

Belongs to the cysteine dioxygenase family. In terms of assembly, monomer. Fe(2+) serves as cofactor. The cofactor is Ni(2+). Zn(2+) is required as a cofactor. The thioether cross-link between Cys-93 and Tyr-157 plays a structural role through stabilizing the Fe(2+) ion, and prevents the production of highly damaging free hydroxyl radicals by holding the oxygen radical via hydroxyl hydrogen. Highest expression in liver. Also expressed in kidney, lung, brain and small intestine.

The enzyme catalyses L-cysteine + O2 = 3-sulfino-L-alanine + H(+). Its pathway is organosulfur biosynthesis; taurine biosynthesis; hypotaurine from L-cysteine: step 1/2. Functionally, catalyzes the oxidation of cysteine to cysteine sulfinic acid with addition of molecular dioxygen. In Mus musculus (Mouse), this protein is Cysteine dioxygenase type 1 (Cdo1).